The primary structure comprises 503 residues: V-type proton ATPase subunit B (503 aa).

Residue Arg378 coordinates ATP. Phosphoserine is present on residues Ser491, Ser492, Ser502, and Ser503.

The protein belongs to the ATPase alpha/beta chains family. V-ATPase is a heteromultimeric enzyme composed of a peripheral catalytic V1 complex (components A to H) attached to an integral membrane V0 proton pore complex (components: a, c, c', c'', d, e, f and VOA1). Interacts with rav1.

The protein resides in the vacuole membrane. Functionally, non-catalytic subunit of the V1 complex of vacuolar(H+)-ATPase (V-ATPase), a multisubunit enzyme composed of a peripheral complex (V1) that hydrolyzes ATP and a membrane integral complex (V0) that translocates protons. V-ATPase is responsible for acidifying and maintaining the pH of intracellular compartments. The polypeptide is V-type proton ATPase subunit B (Schizosaccharomyces pombe (strain 972 / ATCC 24843) (Fission yeast)).